Reading from the N-terminus, the 484-residue chain is Crt homolog 2 (484 aa).

Topologically, residues 1-57 are cytoplasmic; that stretch reads MSEEKLPLLSPLNENDIENDYKDENLKSDLDKLSNVKKQSIIQRFKDYLKNSISKQT. A helical transmembrane segment spans residues 58–78; that stretch reads ATVLVYVVLYILSGVINSLLL. At 79-94 the chain is on the vacuolar side; it reads KKVMNVFTNYGFFLNQ. A helical transmembrane segment spans residues 95–115; it reads LTNYGYVPIFGAIVLYKILFT. The Cytoplasmic segment spans residues 116–128; sequence NDIPKDTRSFPQW. The chain crosses the membrane as a helical span at residues 129–149; that stretch reads KFVIMGALDAVTGYFVVIGGI. Topologically, residues 150–154 are vacuolar; that stretch reads KTTGP. The helical transmembrane segment at 155–175 threads the bilayer; the sequence is LQQLLNQSVIPFTMLLSFIFL. Residues 176 to 178 are Cytoplasmic-facing; the sequence is KER. The helical transmembrane segment at 179–199 threads the bilayer; the sequence is YSLIQLGGALIIIGGVVVSLI. Residues 200-210 are Vacuolar-facing; that stretch reads PSLTGGNTSGN. A glycan (N-linked (GlcNAc...) asparagine) is linked at Asn-206. Residues 211-231 form a helical membrane-spanning segment; that stretch reads MLFYNFFYLISMIPYAFSNVY. Topologically, residues 232-244 are cytoplasmic; that stretch reads KAIGFSTVEDMDV. The chain crosses the membrane as a helical span at residues 245–265; sequence WYLQYFDALYQSLVGTVLFPI. At 266-328 the chain is on the vacuolar side; the sequence is NNWLPPPSDM…LGCDNCHGAW (63 aa). Asn-302 carries N-linked (GlcNAc...) asparagine glycosylation. A helical membrane pass occupies residues 329–349; that stretch reads VVVLIYMAVNVLYNVFILLVL. Residues 350–355 are Cytoplasmic-facing; it reads KHAGAT. A helical membrane pass occupies residues 356 to 378; the sequence is VFSIANTLRLPLTNIAFSFKFIM. The Vacuolar segment spans residues 379-382; that stretch reads GSDS. Residues 383-403 traverse the membrane as a helical segment; that stretch reads NPFSGLSVAGLCIILLGLGGY. Residues 404–484 are Cytoplasmic-facing; that stretch reads RVGSMIKQKK…RNQNSIYGDQ (81 aa).

Belongs to the CRT-like transporter family.

It is found in the vacuole membrane. Its function is as follows. Nutrient transporter. Involved in maintaining the osmotic homeostasis of the digestive vacuole. This Dictyostelium discoideum (Social amoeba) protein is Crt homolog 2 (crtp2).